The chain runs to 385 residues: MKLVRKDIEKDNAGQVTLVPEEPEDMWHTFNLVQVGDSLRASTIRKVQTESSTGSVGSNRVRTTLTLCVEAIDFDSQACQLRVKGTNIQENEYVKMGAYHTIELEPNRQFTLAKKQWDSVVLERIEQACDPAWSADVAAVVMQEGLAHVCLVTPSMTLTRAKVEVNIPRKRKGNCSQHDRALERFYEQVVQAIQRHINFEVVKCVLVASPGFVREQFCDYMFQQAVKTDNKVLLENRSKFLQVHASSGHKYSLKEALCDPTVASRLSDTKAAGEVKALDDFYKMLQHEPDRAFYGLKQVERANEALAIDTLLISDELFRHQDVATRSRYVRLVDSVKENAGTVRIFSSLHVSGEQLGQLTGVAAILRFPVPELSDQEDDSSSEED.

Lysine 162 participates in a covalent cross-link: Glycyl lysine isopeptide (Lys-Gly) (interchain with G-Cter in SUMO2). A phosphoserine mark is found at serine 374, serine 380, serine 381, and serine 382.

The protein belongs to the eukaryotic release factor 1 family. Pelota subfamily. In terms of assembly, component of the Pelota-HBS1L complex, also named Dom34-Hbs1 complex, composed of PELO and HBS1L. Interacts with PINK1. Interacts with ABCE1. Interacts with CNOT4. Requires a divalent metal cation as cofactor. Ubiquitously expressed.

It is found in the cytoplasm. Its function is as follows. Component of the Pelota-HBS1L complex, a complex that recognizes stalled ribosomes and triggers the No-Go Decay (NGD) pathway. In the Pelota-HBS1L complex, PELO recognizes ribosomes stalled at the 3' end of an mRNA and engages stalled ribosomes by destabilizing mRNA in the mRNA channel. Following mRNA extraction from stalled ribosomes by the SKI complex, the Pelota-HBS1L complex promotes recruitment of ABCE1, which drives the disassembly of stalled ribosomes, followed by degradation of damaged mRNAs as part of the NGD pathway. As part of the PINK1-regulated signaling, upon mitochondrial damage is recruited to the ribosome/mRNA-ribonucleoprotein complex associated to mitochondrial outer membrane thereby enabling the recruitment of autophagy receptors and induction of mitophagy. This is Protein pelota homolog from Mus musculus (Mouse).